We begin with the raw amino-acid sequence, 526 residues long: METTFRSALVKNFLGQSPDWYKLAILVFLVVNPLVFFLVDPFIAGWLLVVEFIFTLAMALKCYPLLPGGLLAIESVLIGMTSPDRVGEEIAHNLEVLLLLIFMVAGIYFMKQLLLFVFTKLLLNIRSKMLLSLAFCFAAALLSAFLDALTVVAVVISVATGFYSIYHNVASNRSDGNDGNIDVGDDSTLVSDDHKQTLEQFRAFLRSLLMHAGVGTALGGVMTMVGEPQNLIIAKSAGWGFVDFFLRMAPVTLPVFACGLLVCLLLERFGVFGYGAKLPERVREVLTEFDRQATAGRSKQEQVRLVVQALIGIWLVVALAFHLAEVGLIGLSVIILATSLCGVTDEHAIGKAFQEALPFTALLTVFFTVVAVIIEQHLFTPIIHFVLQAQPSSQLALFYLFNGLLSSVSDNVFVGTVYINEARAAFENGVISLKQFEMLAVAINTGTNLPSVATPNGQAAFLFLLTSALAPLVRLSYGRMVWMALPYTVVLTLVGLLCVQFTLAPATELLTQWHWLTLPSIEAATH.

10 helical membrane passes run 13–33 (FLGQSPDWYKLAILVFLVVNP), 98–118 (LLLIFMVAGIYFMKQLLLFVF), 133–155 (LAFCFAAALLSAFLDALTVVAVV), 208–228 (LLMHAGVGTALGGVMTMVGEP), 244–264 (FFLRMAPVTLPVFACGLLVCL), 309–329 (ALIGIWLVVALAFHLAEVGLI), 355–375 (EALPFTALLTVFFTVVAVIIE), 395–415 (LALFYLFNGLLSSVSDNVFVG), 452–472 (VATPNGQAAFLFLLTSALAPL), and 481–501 (VWMALPYTVVLTLVGLLCVQF).

Belongs to the NhaB Na(+)/H(+) (TC 2.A.34) antiporter family.

Its subcellular location is the cell inner membrane. It carries out the reaction 2 Na(+)(in) + 3 H(+)(out) = 2 Na(+)(out) + 3 H(+)(in). Functionally, na(+)/H(+) antiporter that extrudes sodium in exchange for external protons. This chain is Na(+)/H(+) antiporter NhaB, found in Serratia proteamaculans (strain 568).